The following is a 610-amino-acid chain: Serine/threonine-protein kinase VRK1 (610 aa).

In terms of domain architecture, Protein kinase spans 32-384; that stretch reads FIVGKQFATG…PRKRTTRKAV (353 aa). ATP contacts are provided by residues 38 to 46 and K61; that span reads FATGGFGRI. The active-site Proton acceptor is D167. Disordered stretches follow at residues 317–476, 498–530, 544–577, and 590–610; these read IQKT…NKVA, ISVASDKSPTTSTPSSSSGLRSKRKSSEDVGEG, KKAKTKSGISSATKASPTELRRVPGVRNFPKGRR, and ERLASRQTKPTFDDSSCSSEV. A compositionally biased stretch (basic and acidic residues) spans 352 to 373; that stretch reads AVKEESDNKDNDEVEVKPEKKA. The span at 388 to 397 shows a compositional bias: acidic residues; the sequence is NDSDDNEEQY. The segment covering 447–458 has biased composition (low complexity); sequence TTPSSAASTSRS. The span at 465 to 474 shows a compositional bias: polar residues; it reads LTSSTASSNK. A compositionally biased stretch (low complexity) spans 502-517; it reads SDKSPTTSTPSSSSGL. 2 stretches are compositionally biased toward polar residues: residues 550–559 and 594–610; these read SGISSATKAS and SRQTKPTFDDSSCSSEV.

It belongs to the protein kinase superfamily. CK1 Ser/Thr protein kinase family. VRK subfamily. In terms of processing, autophosphorylates in vitro. In terms of tissue distribution, present in germ cells at all stages of progression from the mitotic zone to mature oocytes, but not in maturing spermatids (at the protein level). Expressed in the ventral nerve cord and vulva cells.

The protein resides in the nucleus. The protein localises to the cytoplasm. It localises to the cajal body. It catalyses the reaction L-seryl-[protein] + ATP = O-phospho-L-seryl-[protein] + ADP + H(+). The enzyme catalyses L-threonyl-[protein] + ATP = O-phospho-L-threonyl-[protein] + ADP + H(+). Serine/threonine kinase that phosphorylates baf-1, thus regulating the association of baf-1 with chromatin and nuclear membrane proteins during nuclear envelope formation. May act through the egl-17 signaling pathway. Essential in hermaphrodites for formation of the vulva, uterus, and uterine seam cells and for development and maintenance of the somatic gonad and thus the germ line. Acts to prevent cep-1 from triggering an inappropriate cell cycle arrest, thereby promoting germ cell proliferation. Regulates anchor cell polarity and the timing of anchor cell invasion through the basement membranes separating vulval and somatic gonadal cells during the L3 larval stage. This Caenorhabditis elegans protein is Serine/threonine-protein kinase VRK1.